Here is a 627-residue protein sequence, read N- to C-terminus: Xaa-Pro aminopeptidase 1 (627 aa).

2 residues coordinate a peptide: arginine 88 and histidine 405. Positions 424, 435, and 498 each coordinate Mn(2+). The a peptide site is built by histidine 498, histidine 507, and glutamate 533. Residues glutamate 533 and glutamate 547 each contribute to the Mn(2+) site.

This sequence belongs to the peptidase M24B family. In terms of assembly, homodimer. Requires Mn(2+) as cofactor.

It localises to the cytoplasm. Its subcellular location is the cytosol. It carries out the reaction Release of any N-terminal amino acid, including proline, that is linked to proline, even from a dipeptide or tripeptide.. Its function is as follows. Metalloaminopeptidase that catalyzes the removal of a penultimate prolyl residue from the N-termini of peptides, such as Arg-Pro-Pro. In Dictyostelium discoideum (Social amoeba), this protein is Xaa-Pro aminopeptidase 1 (xpnpep1).